A 307-amino-acid polypeptide reads, in one-letter code: Ornithine carbamoyltransferase (307 aa).

Carbamoyl phosphate-binding positions include 53–56, Gln-80, Arg-104, and 131–134; these read STRT and HPCQ. Residues Asn-162, Asp-220, and 224–225 contribute to the L-ornithine site; that span reads SM. Carbamoyl phosphate is bound by residues 260–261 and Arg-288; that span reads CL.

This sequence belongs to the aspartate/ornithine carbamoyltransferase superfamily. OTCase family.

The protein localises to the cytoplasm. The catalysed reaction is carbamoyl phosphate + L-ornithine = L-citrulline + phosphate + H(+). It participates in amino-acid biosynthesis; L-arginine biosynthesis; L-arginine from L-ornithine and carbamoyl phosphate: step 1/3. Functionally, reversibly catalyzes the transfer of the carbamoyl group from carbamoyl phosphate (CP) to the N(epsilon) atom of ornithine (ORN) to produce L-citrulline. This Nitrosomonas europaea (strain ATCC 19718 / CIP 103999 / KCTC 2705 / NBRC 14298) protein is Ornithine carbamoyltransferase.